A 420-amino-acid chain; its full sequence is Serine hydroxymethyltransferase (420 aa).

(6S)-5,6,7,8-tetrahydrofolate is bound by residues L121 and G125–L127. K229 is modified (N6-(pyridoxal phosphate)lysine).

This sequence belongs to the SHMT family. Homodimer. Requires pyridoxal 5'-phosphate as cofactor.

The protein localises to the cytoplasm. It catalyses the reaction (6R)-5,10-methylene-5,6,7,8-tetrahydrofolate + glycine + H2O = (6S)-5,6,7,8-tetrahydrofolate + L-serine. Its pathway is one-carbon metabolism; tetrahydrofolate interconversion. The protein operates within amino-acid biosynthesis; glycine biosynthesis; glycine from L-serine: step 1/1. Functionally, catalyzes the reversible interconversion of serine and glycine with tetrahydrofolate (THF) serving as the one-carbon carrier. This reaction serves as the major source of one-carbon groups required for the biosynthesis of purines, thymidylate, methionine, and other important biomolecules. Also exhibits THF-independent aldolase activity toward beta-hydroxyamino acids, producing glycine and aldehydes, via a retro-aldol mechanism. This is Serine hydroxymethyltransferase from Pasteurella multocida (strain Pm70).